Reading from the N-terminus, the 312-residue chain is Methionyl-tRNA formyltransferase (312 aa).

110-113 contributes to the (6S)-5,6,7,8-tetrahydrofolate binding site; it reads SLLP.

It belongs to the Fmt family.

It carries out the reaction L-methionyl-tRNA(fMet) + (6R)-10-formyltetrahydrofolate = N-formyl-L-methionyl-tRNA(fMet) + (6S)-5,6,7,8-tetrahydrofolate + H(+). Its function is as follows. Attaches a formyl group to the free amino group of methionyl-tRNA(fMet). The formyl group appears to play a dual role in the initiator identity of N-formylmethionyl-tRNA by promoting its recognition by IF2 and preventing the misappropriation of this tRNA by the elongation apparatus. The polypeptide is Methionyl-tRNA formyltransferase (Mycobacterium marinum (strain ATCC BAA-535 / M)).